Here is a 238-residue protein sequence, read N- to C-terminus: 7-cyano-7-deazaguanine synthase (238 aa).

12–22 is an ATP binding site; it reads FSGGQDSGTCL. Zn(2+) is bound by residues C200, C215, C218, and C221.

Belongs to the QueC family. Requires Zn(2+) as cofactor.

The catalysed reaction is 7-carboxy-7-deazaguanine + NH4(+) + ATP = 7-cyano-7-deazaguanine + ADP + phosphate + H2O + H(+). It participates in purine metabolism; 7-cyano-7-deazaguanine biosynthesis. Its function is as follows. Catalyzes the ATP-dependent conversion of 7-carboxy-7-deazaguanine (CDG) to 7-cyano-7-deazaguanine (preQ(0)). The sequence is that of 7-cyano-7-deazaguanine synthase from Lawsonia intracellularis (strain PHE/MN1-00).